Consider the following 371-residue polypeptide: NADH-ubiquinone oxidoreductase chain 1 (371 aa).

10 helical membrane-spanning segments follow: residues 7-27, 44-64, 77-97, 109-129, 153-173, 180-200, 226-246, 263-283, 302-322, and 338-358; these read IISILEVLLVLVPSLLAVAYV, PNAVGYLGLLQAFADALKLLL, LFFLGPVITLIFSLLGYAVIP, LGILYMLAVSSLATYGILLAG, LVLSSAILLVIMLTGSFNLGV, AVLFVLPLLPIFIIFFIGSIA, AVVFVFFFLAEYGSIVLMCIL, VFNILDFVYSNLFIFEINWMV, GWLYGWIIGLKSSIMIFIFIL, and FCWTVLLPIIFALIILVPCIL.

The protein belongs to the complex I subunit 1 family.

Its subcellular location is the mitochondrion inner membrane. It catalyses the reaction a ubiquinone + NADH + 5 H(+)(in) = a ubiquinol + NAD(+) + 4 H(+)(out). In terms of biological role, core subunit of the mitochondrial membrane respiratory chain NADH dehydrogenase (Complex I) that is believed to belong to the minimal assembly required for catalysis. Complex I functions in the transfer of electrons from NADH to the respiratory chain. The immediate electron acceptor for the enzyme is believed to be ubiquinone. The chain is NADH-ubiquinone oxidoreductase chain 1 (ndh-1) from Neurospora crassa (strain ATCC 24698 / 74-OR23-1A / CBS 708.71 / DSM 1257 / FGSC 987).